The sequence spans 100 residues: Putative protein p52 (100 aa).

Residues 81-100 (PKSFKSSTDTAHSDRWLSLG) are disordered. A compositionally biased stretch (basic and acidic residues) spans 91-100 (AHSDRWLSLG).

In Escherichia coli (Bacteriophage APSE-1), this protein is Putative protein p52 (52).